Here is a 576-residue protein sequence, read N- to C-terminus: Vesicular glutamate transporter 1 (576 aa).

Over 1-63 (MEFRKEEFKK…CTCFGLPRRY (63 aa)) the chain is Cytoplasmic. Residues 64–84 (IIAIMSGLGFCISFGIRCNLG) traverse the membrane as a helical segment. The Vesicular segment spans residues 85–116 (VAIVSMVNNNTVYKGNKIVIEQAQFTWDPETV). Residue N93 is glycosylated (N-linked (GlcNAc...) asparagine). The helical transmembrane segment at 117–137 (GMIHGSFFWGYIVTQIPGGYI) threads the bilayer. Residues 138–140 (CQK) lie on the Cytoplasmic side of the membrane. The helical transmembrane segment at 141 to 161 (FAANRVFGFAIVATSTLNMLI) threads the bilayer. Topologically, residues 162-168 (PSAARVH) are vesicular. Residues 169-189 (FACVICVRILQGLVEGVTYPA) form a helical membrane-spanning segment. Residues 190–208 (CHGIWSKWAPPLERSRLAT) are Cytoplasmic-facing. A helical membrane pass occupies residues 209–229 (TAFCGSYAGAVVAMPLAGVLV). At 230–236 (QYSGWSS) the chain is on the vesicular side. A helical membrane pass occupies residues 237-257 (VFYVYGSFGIMWYMFWILVSY). Residues 258-302 (ESPAIHPTISEEEKKYIEESIGESTGLMNPMAKFKAPWRKFFTSM) lie on the Cytoplasmic side of the membrane. The helical transmembrane segment at 303-323 (PVYAIIVANFCRSWTFYLLLI) threads the bilayer. At 324 to 341 (SQPAYFEEVFGFEISKVG) the chain is on the vesicular side. Residues 342–362 (LLSALPHLVMTIIVPIGGQIA) form a helical membrane-spanning segment. Residues 363–378 (DFLRTKRIMSTTNVRK) are Cytoplasmic-facing. A helical membrane pass occupies residues 379–399 (MMNCGGFGMEATLLLVVGYSH). At 400–401 (SR) the chain is on the vesicular side. Residues 402–422 (GVAISFLVLAVGFSGFAISGF) form a helical membrane-spanning segment. Residues 423–435 (NVNHLDIAPRYAS) are Cytoplasmic-facing. Residues 436–456 (ILMGISNGVGTLSGMVCPLIV) form a helical membrane-spanning segment. Topologically, residues 457–469 (GAMTKHKTREEWQ) are vesicular. The helical transmembrane segment at 470-490 (YVFLIASLVHYGGVLFYGIFA) threads the bilayer. Topologically, residues 491-576 (SGEKQPWAEP…YGTVAERDLS (86 aa)) are cytoplasmic. A disordered region spans residues 517–547 (ADESEEQSQAYGAYGSYGATQTTSQQNGGWT). Residues 534–545 (GATQTTSQQNGG) are compositionally biased toward polar residues.

Belongs to the major facilitator superfamily. Sodium/anion cotransporter family. VGLUT subfamily.

Its subcellular location is the cytoplasmic vesicle. It localises to the secretory vesicle. The protein localises to the synaptic vesicle membrane. It is found in the cell membrane. The protein resides in the synapse. Its subcellular location is the synaptosome. It carries out the reaction L-glutamate(out) = L-glutamate(in). It catalyses the reaction chloride(in) = chloride(out). The catalysed reaction is 3 Na(+)(out) + phosphate(out) = 3 Na(+)(in) + phosphate(in). The enzyme catalyses phosphate(in) = phosphate(out). It carries out the reaction K(+)(in) + H(+)(out) = K(+)(out) + H(+)(in). Chloride channel activity is allosterically activated by lumenal H(+) and Cl(-) leading to synaptic vesicles acidification. The L-glutamate transport activity is allosterically activated by lumenal H(+) and Cl(-). The allosteric activation by H(+) efficiently prevents non-vesicular efflux across the plasma membrane, thereby restricting L-glutamate transport activity to acidic membranes such as synaptic vesicles. Functionally, multifunctional transporter that transports L-glutamate as well as multiple ions such as chloride, proton, potassium, sodium and phosphate. At the synaptic vesicle membrane, mainly functions as an uniporter which transports preferentially L-glutamate but also phosphate from the cytoplasm into synaptic vesicles at presynaptic nerve terminals of excitatory neural cells. The L-glutamate or phosphate uniporter activity is electrogenic and is driven by the proton electrochemical gradient, mainly by the electrical gradient established by the vacuolar H(+)-ATPase across the synaptic vesicle membrane. In addition, functions as a chloride channel that allows a chloride permeation through the synaptic vesicle membrane that affects the proton electrochemical gradient and promotes synaptic vesicles acidification. Moreover, may function as a K(+)/H(+) antiport allowing to maintain the electrical gradient and to decrease chemical gradient and therefore sustain vesicular glutamate uptake. The vesicular K(+)/H(+) antiport activity is electroneutral. At the plasma membrane, following exocytosis, functions as a symporter of Na(+) and phosphate from the extracellular space to the cytoplasm allowing synaptic phosphate homeostasis regulation. The symporter activity is driven by an inside negative membrane potential and is electrogenic. Is necessary for synaptic signaling of visual-evoked responses from photoreceptors. The chain is Vesicular glutamate transporter 1 from Xenopus tropicalis (Western clawed frog).